The primary structure comprises 385 residues: dTDP-4-dehydro-2,3,6-trideoxy-D-glucose 4-aminotransferase (385 aa).

The residue at position 182 (Lys-182) is an N6-(pyridoxal phosphate)lysine.

This sequence belongs to the DegT/DnrJ/EryC1 family. In terms of assembly, homodimer. The cofactor is pyridoxal 5'-phosphate.

The enzyme catalyses dTDP-4-amino-2,3,4,6-tetradeoxy-alpha-D-erythro-hexopyranose + 2-oxoglutarate = dTDP-4-dehydro-2,3,6-trideoxy-alpha-D-hexopyranose + L-glutamate. In terms of biological role, involved in the biosynthesis of forosamine ((4-dimethylamino)-2,3,4,6-tetradeoxy-alpha-D-threo-hexopyranose), a highly deoxygenated sugar component of several bioactive natural products such as the insecticidal spinosyns A and D. In the presence of pyridoxal 5'-phosphate (PLP) and alpha-ketoglutarate, catalyzes the C-4 transamination of dTDP-4-keto-2,3,6-trideoxy-alpha-D-glucose to yield dTDP-4-amino-2,3,4,6-tetradeoxy-alpha-D-glucose. It can also use pyruvate, but less efficiently than alpha-ketoglutarate. Also able to catalyze the C-4 transamination of dTDP-4-keto-2,6-dideoxy-alpha-D-glucose to yield dTDP-4-amino-2,4,6-trideoxy-D-glucose. This chain is dTDP-4-dehydro-2,3,6-trideoxy-D-glucose 4-aminotransferase, found in Saccharopolyspora spinosa.